Consider the following 365-residue polypeptide: tRNA(Met) cytidine acetate ligase (365 aa).

ATP contacts are provided by residues 7–20 (IAEF…HKYL), Gly96, Asn152, and Arg175.

The protein belongs to the TmcAL family.

It is found in the cytoplasm. It carries out the reaction cytidine(34) in elongator tRNA(Met) + acetate + ATP = N(4)-acetylcytidine(34) in elongator tRNA(Met) + AMP + diphosphate. In terms of biological role, catalyzes the formation of N(4)-acetylcytidine (ac(4)C) at the wobble position of elongator tRNA(Met), using acetate and ATP as substrates. First activates an acetate ion to form acetyladenylate (Ac-AMP) and then transfers the acetyl group to tRNA to form ac(4)C34. The sequence is that of tRNA(Met) cytidine acetate ligase from Streptococcus pneumoniae serotype 4 (strain ATCC BAA-334 / TIGR4).